The following is a 115-amino-acid chain: NADH-ubiquinone oxidoreductase chain 3 (115 aa).

Transmembrane regions (helical) follow at residues 3–23, 55–75, and 86–106; these read LALA…ITFW, FFLV…LLPL, and LTIA…AYEW.

It belongs to the complex I subunit 3 family. Core subunit of respiratory chain NADH dehydrogenase (Complex I) which is composed of 45 different subunits. Interacts with TMEM186. Interacts with TMEM242.

It is found in the mitochondrion inner membrane. The enzyme catalyses a ubiquinone + NADH + 5 H(+)(in) = a ubiquinol + NAD(+) + 4 H(+)(out). Functionally, core subunit of the mitochondrial membrane respiratory chain NADH dehydrogenase (Complex I) which catalyzes electron transfer from NADH through the respiratory chain, using ubiquinone as an electron acceptor. Essential for the catalytic activity of complex I. The chain is NADH-ubiquinone oxidoreductase chain 3 from Hylobates lar (Lar gibbon).